The following is a 34-amino-acid chain: Photosystem II reaction center protein M (34 aa).

The chain crosses the membrane as a helical span at residues 5 to 25 (ILAFIATALFILVPTAFLLII).

Belongs to the PsbM family. As to quaternary structure, PSII is composed of 1 copy each of membrane proteins PsbA, PsbB, PsbC, PsbD, PsbE, PsbF, PsbH, PsbI, PsbJ, PsbK, PsbL, PsbM, PsbT, PsbX, PsbY, PsbZ, Psb30/Ycf12, at least 3 peripheral proteins of the oxygen-evolving complex and a large number of cofactors. It forms dimeric complexes.

Its subcellular location is the plastid. The protein localises to the chloroplast thylakoid membrane. Its function is as follows. One of the components of the core complex of photosystem II (PSII). PSII is a light-driven water:plastoquinone oxidoreductase that uses light energy to abstract electrons from H(2)O, generating O(2) and a proton gradient subsequently used for ATP formation. It consists of a core antenna complex that captures photons, and an electron transfer chain that converts photonic excitation into a charge separation. This subunit is found at the monomer-monomer interface. This Phaseolus vulgaris (Kidney bean) protein is Photosystem II reaction center protein M.